Reading from the N-terminus, the 500-residue chain is Oogenesin-3 (500 aa).

Residues 116–143 (RCKLRVLKWRDEQHDFCGIWPGSHEAED) form an LRR 1; degenerate repeat. The stretch at 198–222 (HLLCRKLVIETLTKDTVIEIFKIVN) is one LRR 2; degenerate repeat. The stretch at 223-248 (ADCIQELELYSLCLEDLAFLNPYLRQ) is one LRR 3; degenerate repeat. Residues 249–285 (MDNLLELTLDHVTDSLSMGDSEMCEEEMITLVSQLPT) form an LRR 4; degenerate repeat. LRR repeat units lie at residues 286-311 (FPCL…LRCL), 312-343 (KKPL…FELK), 344-367 (CLYL…LESV), 368-395 (RHTL…ALSQ), and 396-420 (CSHL…LLQH).

Belongs to the PRAME family. As to expression, expressed in ovary, specifically in oocytes. Detected in follicles with two layers of granulosa cells, and are present in early as well as large antral follicles.

This chain is Oogenesin-3, found in Mus musculus (Mouse).